Consider the following 477-residue polypeptide: Aspartyl/glutamyl-tRNA(Asn/Gln) amidotransferase subunit B (477 aa).

This sequence belongs to the GatB/GatE family. GatB subfamily. As to quaternary structure, heterotrimer of A, B and C subunits.

The catalysed reaction is L-glutamyl-tRNA(Gln) + L-glutamine + ATP + H2O = L-glutaminyl-tRNA(Gln) + L-glutamate + ADP + phosphate + H(+). It catalyses the reaction L-aspartyl-tRNA(Asn) + L-glutamine + ATP + H2O = L-asparaginyl-tRNA(Asn) + L-glutamate + ADP + phosphate + 2 H(+). In terms of biological role, allows the formation of correctly charged Asn-tRNA(Asn) or Gln-tRNA(Gln) through the transamidation of misacylated Asp-tRNA(Asn) or Glu-tRNA(Gln) in organisms which lack either or both of asparaginyl-tRNA or glutaminyl-tRNA synthetases. The reaction takes place in the presence of glutamine and ATP through an activated phospho-Asp-tRNA(Asn) or phospho-Glu-tRNA(Gln). The protein is Aspartyl/glutamyl-tRNA(Asn/Gln) amidotransferase subunit B of Streptococcus gordonii (strain Challis / ATCC 35105 / BCRC 15272 / CH1 / DL1 / V288).